The following is a 405-amino-acid chain: L-carnitine CoA-transferase (405 aa).

CoA-binding residues include K97 and R104. Catalysis depends on D169, which acts as the Nucleophile.

It belongs to the CoA-transferase III family. CaiB subfamily. Homodimer.

Its subcellular location is the cytoplasm. The enzyme catalyses crotonobetainyl-CoA + (R)-carnitine = crotonobetaine + (R)-carnitinyl-CoA. It catalyses the reaction 4-(trimethylamino)butanoyl-CoA + (R)-carnitine = (R)-carnitinyl-CoA + 4-(trimethylamino)butanoate. The protein operates within amine and polyamine metabolism; carnitine metabolism. Catalyzes the reversible transfer of the CoA moiety from gamma-butyrobetainyl-CoA to L-carnitine to generate L-carnitinyl-CoA and gamma-butyrobetaine. Is also able to catalyze the reversible transfer of the CoA moiety from gamma-butyrobetainyl-CoA or L-carnitinyl-CoA to crotonobetaine to generate crotonobetainyl-CoA. The sequence is that of L-carnitine CoA-transferase from Escherichia coli (strain SE11).